Reading from the N-terminus, the 141-residue chain is Hemoglobin subunit alpha (141 aa).

In terms of domain architecture, Globin spans 1–141 (VLSSADKNNV…VSTVLTSKYR (141 aa)). Serine 3 carries the phosphoserine modification. Residues lysine 7 and lysine 11 each carry the N6-succinyllysine modification. Lysine 16 bears the N6-acetyllysine; alternate mark. Lysine 16 bears the N6-succinyllysine; alternate mark. Tyrosine 24 is subject to Phosphotyrosine. The residue at position 35 (serine 35) is a Phosphoserine. N6-succinyllysine is present on lysine 40. The residue at position 49 (serine 49) is a Phosphoserine. An O2-binding site is contributed by histidine 58. A heme b-binding site is contributed by histidine 87. Serine 102 is modified (phosphoserine). Phosphothreonine is present on threonine 108. Residue serine 124 is modified to Phosphoserine. Residues threonine 134 and threonine 137 each carry the phosphothreonine modification. Serine 138 carries the post-translational modification Phosphoserine.

Belongs to the globin family. Heterotetramer of two alpha chains and two beta chains. As to expression, red blood cells.

Involved in oxygen transport from the lung to the various peripheral tissues. Functionally, hemopressin acts as an antagonist peptide of the cannabinoid receptor CNR1. Hemopressin-binding efficiently blocks cannabinoid receptor CNR1 and subsequent signaling. This is Hemoglobin subunit alpha (HBA) from Panthera tigris sumatrae (Sumatran tiger).